The chain runs to 452 residues: Gastrin/cholecystokinin type B receptor (452 aa).

The tract at residues Met-1–Leu-21 is disordered. Over Met-1–Arg-57 the chain is Extracellular. 3 N-linked (GlcNAc...) asparagine glycosylation sites follow: Asn-7, Asn-30, and Asn-36. Residues Ile-58–Leu-79 traverse the membrane as a helical segment. The Cytoplasmic segment spans residues Gly-80–Thr-87. A helical transmembrane segment spans residues Val-88–Pro-109. Residues Phe-110–Ser-131 lie on the Extracellular side of the membrane. The cysteines at positions 127 and 205 are disulfide-linked. Residues Tyr-132–Leu-150 traverse the membrane as a helical segment. Residues Glu-151 to His-170 lie on the Cytoplasmic side of the membrane. A helical transmembrane segment spans residues Ala-171–Tyr-189. The Extracellular segment spans residues Pro-190–Ser-219. A helical transmembrane segment spans residues Val-220–Ser-242. Over Arg-243–Arg-338 the chain is Cytoplasmic. Residues Ser-257–Pro-286 are disordered. Residues Met-339–Trp-360 traverse the membrane as a helical segment. Residues Arg-361–Ser-378 lie on the Extracellular side of the membrane. A helical membrane pass occupies residues Phe-379–His-399. Topologically, residues Arg-400–Gly-452 are cytoplasmic. The S-palmitoyl cysteine moiety is linked to residue Cys-413. The interval Arg-421–Gly-452 is disordered. Residues Ser-434–Gly-452 show a composition bias toward polar residues.

The protein belongs to the G-protein coupled receptor 1 family. As to expression, parietal cells, pancreas, brain and various neoplastic tissues.

It localises to the cell membrane. Receptor for gastrin and cholecystokinin. The CCK-B receptors occur throughout the central nervous system where they modulate anxiety, analgesia, arousal, and neuroleptic activity. This receptor mediates its action by association with G proteins that activate a phosphatidylinositol-calcium second messenger system. This chain is Gastrin/cholecystokinin type B receptor (Cckbr), found in Rattus norvegicus (Rat).